The sequence spans 546 residues: Pyridine nucleotide-disulfide oxidoreductase domain-containing protein 1 (546 aa).

This sequence belongs to the class-I pyridine nucleotide-disulfide oxidoreductase family. PYROXD1 subfamily. FAD is required as a cofactor.

In Dictyostelium discoideum (Social amoeba), this protein is Pyridine nucleotide-disulfide oxidoreductase domain-containing protein 1 (pyroxd1).